A 517-amino-acid polypeptide reads, in one-letter code: Bifunctional purine biosynthesis protein PurH (517 aa).

In terms of domain architecture, MGS-like spans 1–145; the sequence is MSPLALVSVS…KNHKDVSVLV (145 aa).

It belongs to the PurH family.

The catalysed reaction is (6R)-10-formyltetrahydrofolate + 5-amino-1-(5-phospho-beta-D-ribosyl)imidazole-4-carboxamide = 5-formamido-1-(5-phospho-D-ribosyl)imidazole-4-carboxamide + (6S)-5,6,7,8-tetrahydrofolate. It carries out the reaction IMP + H2O = 5-formamido-1-(5-phospho-D-ribosyl)imidazole-4-carboxamide. It participates in purine metabolism; IMP biosynthesis via de novo pathway; 5-formamido-1-(5-phospho-D-ribosyl)imidazole-4-carboxamide from 5-amino-1-(5-phospho-D-ribosyl)imidazole-4-carboxamide (10-formyl THF route): step 1/1. It functions in the pathway purine metabolism; IMP biosynthesis via de novo pathway; IMP from 5-formamido-1-(5-phospho-D-ribosyl)imidazole-4-carboxamide: step 1/1. This chain is Bifunctional purine biosynthesis protein PurH, found in Prochlorococcus marinus (strain MIT 9312).